A 474-amino-acid chain; its full sequence is MYRVAKASEYLAITGAGIDDIKLQKKAWIFPGQSCTVFDLSPVNYTFEVQAMSAEKLPFVLPAVFTIGPRVDDQESLLKYAKLISPHDRHSNHVNELVQGIIEGETRVLAASMTMEEVFRGTKQFKQEVFDKVQLELNQFGLLIYNANVKQLVDVPGHEYFSYLGQKTQMEAANQAKVDVAEAKMKGEIGSKLRVGQTLQNAAKIDAETKVIAMQRAGESEKQGIKVRTEVKVFENQREAEVAEANSELAKKKAAWTKAAQVAEVEAKKAVALREAELQGEVEKMNALTTTEKLKADLLSKASVQYETKVQEANWELYKKQKEAEAILFEKKAEAEAQKALADSTFYARKQEAEAELYAKKKEAEGIVTLGNAQGAYVSTLLNALGNNYTAVRDYLMINGGMFQEIAKINAEAVRGLEPKISIWTNGGDNSGGEGAMKEVAGVYKMLPPLFKTVHEQTGMLPPAWMGSLSDKSS.

Cysteine 35 carries the S-palmitoyl cysteine lipid modification. 2 coiled-coil regions span residues glutamate 235–alanine 255 and glutamine 305–glutamate 325.

It belongs to the band 7/mec-2 family. Flotillin subfamily. In terms of processing, may be palmitoylated. Expressed in all plant organs. Primarily expressed in vascular tissues. No change in spatial expression in root upon inoculation. Expression limited to the nodule vascular tissue.

It is found in the cell membrane. It localises to the membrane. The protein resides in the caveola. Functionally, may act as a scaffolding protein within caveolar membranes, functionally participating in formation of caveolae or caveolae-like vesicles. May be involved in nodule formation. The protein is Flotillin-like protein 3 (FLOT3) of Medicago truncatula (Barrel medic).